We begin with the raw amino-acid sequence, 666 residues long: uncharacterized protein (666 aa).

This is an uncharacterized protein from Acanthamoeba polyphaga mimivirus (APMV).